A 438-amino-acid chain; its full sequence is Serine hydroxymethyltransferase (438 aa).

(6S)-5,6,7,8-tetrahydrofolate contacts are provided by residues L119 and 123-125 (GHL). K228 is subject to N6-(pyridoxal phosphate)lysine. (6S)-5,6,7,8-tetrahydrofolate is bound at residue 370–372 (SPF).

Belongs to the SHMT family. In terms of assembly, homodimer. It depends on pyridoxal 5'-phosphate as a cofactor.

The protein localises to the cytoplasm. It carries out the reaction (6R)-5,10-methylene-5,6,7,8-tetrahydrofolate + glycine + H2O = (6S)-5,6,7,8-tetrahydrofolate + L-serine. Its pathway is one-carbon metabolism; tetrahydrofolate interconversion. It functions in the pathway amino-acid biosynthesis; glycine biosynthesis; glycine from L-serine: step 1/1. In terms of biological role, catalyzes the reversible interconversion of serine and glycine with tetrahydrofolate (THF) serving as the one-carbon carrier. This reaction serves as the major source of one-carbon groups required for the biosynthesis of purines, thymidylate, methionine, and other important biomolecules. Also exhibits THF-independent aldolase activity toward beta-hydroxyamino acids, producing glycine and aldehydes, via a retro-aldol mechanism. This Chlorobium chlorochromatii (strain CaD3) protein is Serine hydroxymethyltransferase.